A 231-amino-acid chain; its full sequence is Claudin-10 (231 aa).

Residues 1 to 21 (MASTALEIVAFVVSISGWVLV) form a helical membrane-spanning segment. Topologically, residues 22–80 (SSTLPTDYWKVSTIDGTVITTATYFANLWKICVTDSTGVANCKEFPSMLALDGYIQACR) are extracellular. A helical transmembrane segment spans residues 81-101 (GLMIAAVSLGFFGSIFALFGM). Over 102-115 (KCTKVGGSDQAKAK) the chain is Cytoplasmic. A helical transmembrane segment spans residues 116–136 (IACLAGIVFILSGLCSMTGCS). The Extracellular segment spans residues 137 to 160 (LYANKITTEFFDPLYMEQKYELGA). The helical transmembrane segment at 161 to 181 (ALFIGWAGASLCIIGGVIFCF) threads the bilayer. Residues 182 to 231 (SISDNNKTPRMGYTYNGPTSAMSSRTKYQGGEGDFKTTGPSKQFDKNAYV) lie on the Cytoplasmic side of the membrane.

This sequence belongs to the claudin family. Can form homodimers both in trans (interaction between CLDN10 molecules in opposing membranes) and in cis (interaction between CLDN10 molecules within one membrane). Interacts with CLDN19. In terms of tissue distribution, widely expressed, with highest expression detected in brain cortex, kidney and lung. In kidney, the expression is highest in medulla, with transcripts being detected in medullary thick ascending limb of Henle's loop (mTAL) and outer and inner medullary collecting ducts. Expressed in salivary glands and skin. Detected in kidney with transcripts being detected in PCT, mTAL and cortical collecting duct. Detected in uterus. Expressed in proximal tubules (at protein level). As to expression, only detected in kidney and uterus. In terms of tissue distribution, detected in kidney with transcripts being detected in PCT, mTAL and cortical collecting duct. Detected in uterus. Expressed in the inner ear where it is detected in organ of Corti, marginal cells of stria vascularis, Reissner's membrane and spiral limbus (at protein level).

It is found in the cell junction. The protein resides in the tight junction. It localises to the cell membrane. The protein localises to the endoplasmic reticulum. It carries out the reaction Na(+)(in) = Na(+)(out). The enzyme catalyses Li(+)(in) = Li(+)(out). The catalysed reaction is K(+)(in) = K(+)(out). It catalyses the reaction Rb(+)(in) = Rb(+)(out). It carries out the reaction Cs(+)(in) = Cs(+)(out). The enzyme catalyses NH4(+)(in) = NH4(+)(out). The catalysed reaction is methylamine(out) = methylamine(in). It catalyses the reaction Mg(2+)(in) = Mg(2+)(out). It carries out the reaction Ca(2+)(in) = Ca(2+)(out). The enzyme catalyses Sr(2+)(in) = Sr(2+)(out). The catalysed reaction is chloride(in) = chloride(out). It catalyses the reaction nitrate(in) = nitrate(out). Its function is as follows. Forms paracellular channels: polymerizes in tight junction strands with cation- and anion-selective channels through the strands, conveying epithelial permeability in a process known as paracellular tight junction permeability. Functionally, forms cation-selective paracellular channels. In sweat glands and in the thick ascending limb (TAL) of Henle's loop in kidney, it controls paracellular sodium permeability which is essential for proper sweat production and renal function. Forms anion-selective paracellular channels. In renal proximal tubules, it conveys selective chloride over hydrogencarbonate anion permeability which is required for renal chloride reabsorption and salt homeostasis. This is Claudin-10 from Mus musculus (Mouse).